Consider the following 213-residue polypeptide: Uridine kinase (213 aa).

14 to 21 (GASASGKS) is a binding site for ATP.

Belongs to the uridine kinase family.

The protein resides in the cytoplasm. It catalyses the reaction uridine + ATP = UMP + ADP + H(+). The catalysed reaction is cytidine + ATP = CMP + ADP + H(+). It participates in pyrimidine metabolism; CTP biosynthesis via salvage pathway; CTP from cytidine: step 1/3. The protein operates within pyrimidine metabolism; UMP biosynthesis via salvage pathway; UMP from uridine: step 1/1. The chain is Uridine kinase from Vibrio campbellii (strain ATCC BAA-1116).